Reading from the N-terminus, the 144-residue chain is Large ribosomal subunit protein uL15 (144 aa).

A compositionally biased stretch (basic and acidic residues) spans 1–18 (MRLNDLHPAEGSRPEGKR). The segment at 1–58 (MRLNDLHPAEGSRPEGKRVGRGIGSGLGKTGGRGHKGQKSRSGGSVKPGFEGGQMPLQ) is disordered. Residues 21 to 31 (RGIGSGLGKTG) are compositionally biased toward gly residues.

It belongs to the universal ribosomal protein uL15 family. Part of the 50S ribosomal subunit.

Binds to the 23S rRNA. The chain is Large ribosomal subunit protein uL15 from Alcanivorax borkumensis (strain ATCC 700651 / DSM 11573 / NCIMB 13689 / SK2).